A 388-amino-acid polypeptide reads, in one-letter code: Leucine aminopeptidase 1 (388 aa).

Residues 1–19 (MKVLTAIALSAIAFTGAVA) form the signal peptide. Positions 20-88 (AVITQEAFLN…YPTLHSASYV (69 aa)) are excised as a propeptide. Residues asparagine 106 and asparagine 180 are each glycosylated (N-linked (GlcNAc...) asparagine). Histidine 188 and aspartate 207 together coordinate Zn(2+). N-linked (GlcNAc...) asparagine glycosylation is present at asparagine 232. Zn(2+) contacts are provided by glutamate 246 and aspartate 273. A disulfide bridge connects residues cysteine 322 and cysteine 326. Histidine 355 is a binding site for Zn(2+).

This sequence belongs to the peptidase M28 family. M28E subfamily. Monomer. The cofactor is Zn(2+).

The protein resides in the secreted. Extracellular aminopeptidase that allows assimilation of proteinaceous substrates and which contributes to pathogenicity. The sequence is that of Leucine aminopeptidase 1 (lap1) from Aspergillus fumigatus (strain CBS 144.89 / FGSC A1163 / CEA10) (Neosartorya fumigata).